We begin with the raw amino-acid sequence, 320 residues long: Acetyl-coenzyme A carboxylase carboxyl transferase subunit alpha (320 aa).

A CoA carboxyltransferase C-terminal domain is found at 42-295 (IEDKAKAALH…GDAIAQAFSD (254 aa)).

Belongs to the AccA family. In terms of assembly, acetyl-CoA carboxylase is a heterohexamer composed of biotin carboxyl carrier protein (AccB), biotin carboxylase (AccC) and two subunits each of ACCase subunit alpha (AccA) and ACCase subunit beta (AccD).

It localises to the cytoplasm. The enzyme catalyses N(6)-carboxybiotinyl-L-lysyl-[protein] + acetyl-CoA = N(6)-biotinyl-L-lysyl-[protein] + malonyl-CoA. Its pathway is lipid metabolism; malonyl-CoA biosynthesis; malonyl-CoA from acetyl-CoA: step 1/1. Component of the acetyl coenzyme A carboxylase (ACC) complex. First, biotin carboxylase catalyzes the carboxylation of biotin on its carrier protein (BCCP) and then the CO(2) group is transferred by the carboxyltransferase to acetyl-CoA to form malonyl-CoA. The chain is Acetyl-coenzyme A carboxylase carboxyl transferase subunit alpha from Afipia carboxidovorans (strain ATCC 49405 / DSM 1227 / KCTC 32145 / OM5) (Oligotropha carboxidovorans).